The sequence spans 355 residues: Isopentenyl-diphosphate delta-isomerase (355 aa).

R6 to K7 is a binding site for substrate. FMN contacts are provided by residues A62–T64, S93, and N122. Residue Q152 participates in substrate binding. E153 serves as a coordination point for Mg(2+). FMN is bound by residues K184, T214, G258–G259, and A280–G281.

The protein belongs to the IPP isomerase type 2 family. In terms of assembly, homooctamer. Dimer of tetramers. Requires FMN as cofactor. It depends on NADPH as a cofactor. Mg(2+) serves as cofactor.

It localises to the cytoplasm. It carries out the reaction isopentenyl diphosphate = dimethylallyl diphosphate. Functionally, involved in the biosynthesis of isoprenoids. Catalyzes the 1,3-allylic rearrangement of the homoallylic substrate isopentenyl (IPP) to its allylic isomer, dimethylallyl diphosphate (DMAPP). The sequence is that of Isopentenyl-diphosphate delta-isomerase from Bacillus pumilus (strain SAFR-032).